Here is a 788-residue protein sequence, read N- to C-terminus: LPS-assembly protein LptD (788 aa).

An N-terminal signal peptide occupies residues 1-23 (MSLTSRSLLATMISLALYGPAMA).

Belongs to the LptD family. In terms of assembly, component of the lipopolysaccharide transport and assembly complex. Interacts with LptE and LptA.

The protein resides in the cell outer membrane. Together with LptE, is involved in the assembly of lipopolysaccharide (LPS) at the surface of the outer membrane. The polypeptide is LPS-assembly protein LptD (Photobacterium profundum (strain SS9)).